The following is a 201-amino-acid chain: Hydroxymethylphosphonate dioxygenase (201 aa).

The Fe cation site is built by H47, H71, D72, H94, H117, and D174.

Fe(2+) serves as cofactor.

The catalysed reaction is hydroxymethylphosphonate + O2 = formate + phosphate + 2 H(+). It carries out the reaction (1R)-(2-amino-1-hydroxyethyl)phosphonate + O2 = glycine + phosphate + 2 H(+). The enzyme catalyses (1R)-(1-hydroxyethyl)phosphonate + O2 = acetate + phosphate + 2 H(+). Functionally, part of an oxidative pathway for utilization of methylphosphonic acid as a phosphate source. Catalyzes the oxidation of hydroxymethylphosphonic acid to produce formate and phosphate. Can also use (1R)-(2-amino-1-hydroxyethyl)phosphonic acid and (R)-1-hydroxyethylphosphonic acid with similar catalytic efficiency. The chain is Hydroxymethylphosphonate dioxygenase from Gimesia maris (strain ATCC 29201 / DSM 8797 / 534-30) (Planctomyces maris).